The chain runs to 290 residues: Putative beta-lactamase HcpC (290 aa).

Residues 1-25 (MLENVKKSLFRVLCLGALCLGGLMA) form the signal peptide. 7 TPR repeats span residues 29-62 (PKEL…KENS), 64-98 (CFNL…NYSN), 100-133 (CHLL…LKYA), 134-170 (EGCA…NDGD), 172-205 (CTIL…LKDS), 206-242 (PGCF…ENGG), and 244-278 (CFNL…GAKG). 7 cysteine pairs are disulfide-bonded: Cys-56-Cys-64, Cys-92-Cys-100, Cys-128-Cys-136, Cys-164-Cys-172, Cys-200-Cys-208, Cys-236-Cys-244, and Cys-272-Cys-280.

It belongs to the hcp beta-lactamase family.

Its subcellular location is the secreted. It catalyses the reaction a beta-lactam + H2O = a substituted beta-amino acid. Functionally, may hydrolyze 6-aminopenicillinic acid and 7-aminocephalosporanic acid (ACA) derivatives. This Helicobacter pylori (strain J99 / ATCC 700824) (Campylobacter pylori J99) protein is Putative beta-lactamase HcpC (hcpC).